A 142-amino-acid polypeptide reads, in one-letter code: Large ribosomal subunit protein uL11 (142 aa).

The protein belongs to the universal ribosomal protein uL11 family. Part of the ribosomal stalk of the 50S ribosomal subunit. Interacts with L10 and the large rRNA to form the base of the stalk. L10 forms an elongated spine to which L12 dimers bind in a sequential fashion forming a multimeric L10(L12)X complex. In terms of processing, one or more lysine residues are methylated.

Functionally, forms part of the ribosomal stalk which helps the ribosome interact with GTP-bound translation factors. In Leptospira borgpetersenii serovar Hardjo-bovis (strain JB197), this protein is Large ribosomal subunit protein uL11.